Consider the following 296-residue polypeptide: Fructose-bisphosphate aldolase class 1 (296 aa).

The active-site Proton acceptor is the glutamate 175. Lysine 212 functions as the Schiff-base intermediate with dihydroxyacetone-P in the catalytic mechanism.

Belongs to the class I fructose-bisphosphate aldolase family.

It catalyses the reaction beta-D-fructose 1,6-bisphosphate = D-glyceraldehyde 3-phosphate + dihydroxyacetone phosphate. It participates in carbohydrate degradation; glycolysis; D-glyceraldehyde 3-phosphate and glycerone phosphate from D-glucose: step 4/4. This is Fructose-bisphosphate aldolase class 1 (fda) from Staphylococcus carnosus (strain TM300).